A 215-amino-acid polypeptide reads, in one-letter code: Probable phosphoglycerate mutase GpmB (215 aa).

Residues 8–15, 21–22, arginine 58, 82–85, and 151–152 contribute to the substrate site; these read RHGETEWN, QG, ELDM, and GI. Histidine 9 functions as the Tele-phosphohistidine intermediate in the catalytic mechanism. Glutamate 82 serves as the catalytic Proton donor/acceptor.

It belongs to the phosphoglycerate mutase family. GpmB subfamily.

It carries out the reaction (2R)-2-phosphoglycerate = (2R)-3-phosphoglycerate. It functions in the pathway carbohydrate degradation; glycolysis; pyruvate from D-glyceraldehyde 3-phosphate: step 3/5. In Proteus mirabilis (strain HI4320), this protein is Probable phosphoglycerate mutase GpmB.